Here is a 416-residue protein sequence, read N- to C-terminus: Acyl-coenzyme A amino acid N-acyltransferase 1 (416 aa).

Ser-125 carries the phosphoserine modification. Active-site charge relay system residues include Ser-235, Asp-325, and His-359. Ser-414 carries the post-translational modification Phosphoserine. The Microbody targeting signal signature appears at 414–416 (SKL).

The protein belongs to the C/M/P thioester hydrolase family. As to expression, expressed mainly in liver and kidney with low levels in adrenal and little or no expression in other tissues.

Its subcellular location is the peroxisome. It catalyses the reaction tetracosanoyl-CoA + taurine = N-tetracosanoyl-taurine + CoA + H(+). The catalysed reaction is eicosanoyl-CoA + taurine = N-eicosanoyl-taurine + CoA + H(+). The enzyme catalyses taurine + octadecanoyl-CoA = N-octadecanoyl-taurine + CoA + H(+). It carries out the reaction taurine + hexadecanoyl-CoA = N-hexadecanoyl-taurine + CoA + H(+). It catalyses the reaction tetradecanoyl-CoA + taurine = N-tetradecanoyl-taurine + CoA + H(+). The catalysed reaction is dodecanoyl-CoA + taurine = N-dodecanoyl-taurine + CoA + H(+). Acyltransferase which efficiently conjugates very long-chain and long-chain fatty acids to taurine. Shows no conjugation activity in the presence of glycine. In Mus musculus (Mouse), this protein is Acyl-coenzyme A amino acid N-acyltransferase 1.